Consider the following 247-residue polypeptide: DNA polymerase sliding clamp (247 aa).

The protein belongs to the PCNA family. As to quaternary structure, homotrimer. The subunits circularize to form a toroid; DNA passes through its center. Replication factor C (RFC) is required to load the toroid on the DNA.

Sliding clamp subunit that acts as a moving platform for DNA processing. Responsible for tethering the catalytic subunit of DNA polymerase and other proteins to DNA during high-speed replication. This chain is DNA polymerase sliding clamp, found in Methanospirillum hungatei JF-1 (strain ATCC 27890 / DSM 864 / NBRC 100397 / JF-1).